A 529-amino-acid chain; its full sequence is Transcription factor kayak (529 aa).

Residues 118-134 are compositionally biased toward polar residues; that stretch reads LQGTDSDNSNASWADAQ. Disordered stretches follow at residues 118-166 and 180-239; these read LQGT…SVNG and NAGR…CRKR. Low complexity-rich tracts occupy residues 142 to 153 and 182 to 201; these read TDTSSAHTDSTS and GRGS…TPAR. Residues 219–282 form the bZIP domain; the sequence is EEKRRIRRER…NQLEFFLRAH (64 aa). Residues 221–240 form a basic motif region; sequence KRRIRRERNKQAAARCRKRR. A leucine-zipper region spans residues 247–275; sequence LTYEVEQLEKKRDGLKKEMETLTDVKNQL. Disordered stretches follow at residues 311-390 and 493-529; these read AGSC…PMST and DGGT…LVSL. The span at 315–332 shows a compositional bias: low complexity; that stretch reads DSGSSSHHNNNSNDSSNG. Positions 340–350 are enriched in polar residues; the sequence is SLNSTGRSNSP. Serine 349 is modified (phosphoserine). Low complexity predominate over residues 363–375; sequence DGGLDSSCLLDQD. Residues 376 to 387 show a composition bias toward pro residues; it reads GPPPSKRFPLPP.

Belongs to the bZIP family. Fos subfamily. As to quaternary structure, homodimer. Heterodimer with Jra. The kay-Jra heterodimer binds more stably to the AP-1 site than either of the two proteins alone.

The protein localises to the nucleus. Functionally, developmentally regulated transcription factor AP-1 binds and recognizes the enhancer DNA sequence: 5'-TGA[CG]TCA-3'. May play a role in the function or determination of a particular subset of cells in the developing embryo. Is able to carry out its function either independently of or in conjunction with Jra. This is Transcription factor kayak from Drosophila ananassae (Fruit fly).